Consider the following 284-residue polypeptide: Cuticle collagen dpy-5 (284 aa).

The segment at G88–V284 is disordered. 2 triple-helical region regions span residues C94–N126 and G143–D270. Positions G106–G115 are enriched in gly residues. Over residues A163–R177 the composition is skewed to basic and acidic residues. Low complexity-rich tracts occupy residues I181–P193, E224–P246, and D255–A271.

The protein belongs to the cuticular collagen family. Collagen polypeptide chains are complexed within the cuticle by disulfide bonds and other types of covalent cross-links. In terms of processing, may be a substrate of bli-4.

Its function is as follows. Nematode cuticles are composed largely of collagen-like proteins. The cuticle functions both as an exoskeleton and as a barrier to protect the worm from its environment. This chain is Cuticle collagen dpy-5 (dpy-5), found in Caenorhabditis elegans.